The sequence spans 145 residues: UPF0735 ACT domain-containing protein CKL_0858 (145 aa).

An ACT domain is found at 69–144 (TLGLTLAHKA…SVIKVNLAAV (76 aa)).

The protein belongs to the UPF0735 family.

This Clostridium kluyveri (strain ATCC 8527 / DSM 555 / NBRC 12016 / NCIMB 10680 / K1) protein is UPF0735 ACT domain-containing protein CKL_0858.